Reading from the N-terminus, the 506-residue chain is Maturase K (506 aa).

The protein belongs to the intron maturase 2 family. MatK subfamily.

It is found in the plastid. Its subcellular location is the chloroplast. Functionally, usually encoded in the trnK tRNA gene intron. Probably assists in splicing its own and other chloroplast group II introns. The polypeptide is Maturase K (Arabis alpina (Alpine rock-cress)).